The primary structure comprises 213 residues: Glycerol-3-phosphate acyltransferase (213 aa).

Transmembrane regions (helical) follow at residues 3–23 (ILLAALVAYLIGSVSFAVVVS), 51–71 (KAAILTLVGDAFKGWIAVWLA), 78–98 (DVAVAWVAIAVFLGHLYPVFF), 115–135 (AVHPVLGLATALTWLIVAFFF), and 140–160 (LAALVAAVFAPVFDVFLFGTP).

This sequence belongs to the PlsY family. In terms of assembly, probably interacts with PlsX.

The protein resides in the cell inner membrane. The enzyme catalyses an acyl phosphate + sn-glycerol 3-phosphate = a 1-acyl-sn-glycero-3-phosphate + phosphate. Its pathway is lipid metabolism; phospholipid metabolism. Functionally, catalyzes the transfer of an acyl group from acyl-phosphate (acyl-PO(4)) to glycerol-3-phosphate (G3P) to form lysophosphatidic acid (LPA). This enzyme utilizes acyl-phosphate as fatty acyl donor, but not acyl-CoA or acyl-ACP. This Burkholderia cenocepacia (strain ATCC BAA-245 / DSM 16553 / LMG 16656 / NCTC 13227 / J2315 / CF5610) (Burkholderia cepacia (strain J2315)) protein is Glycerol-3-phosphate acyltransferase.